The following is a 388-amino-acid chain: Putative F-box protein At3g49520 (388 aa).

Residues 1 to 47 form the F-box domain; it reads MTTISDLPYDLVKEIFSWVPFTSLRAVRSTCKTWNALSKNQIFGKKS.

This chain is Putative F-box protein At3g49520, found in Arabidopsis thaliana (Mouse-ear cress).